Here is a 378-residue protein sequence, read N- to C-terminus: Zinc transporter 7 (378 aa).

The Cytoplasmic segment spans residues 1–37 (MLPLSIKDDEYKPPKFNLFGKISGWFRSILSDKTSRN). A helical transmembrane segment spans residues 38–58 (LFFFLCLNLSFAFVELLYGIW). Residues 59–67 (SNCLGLISD) are Lumenal-facing. Residues 68-88 (SFHMFFDSTAILAGLAASVIS) form a helical membrane-spanning segment. Residues 89–102 (KWRDNDAFSYGYVR) are Cytoplasmic-facing. The helical transmembrane segment at 103–123 (AEVLAGFVNGLFLIFTAFFIF) threads the bilayer. The Lumenal portion of the chain corresponds to 124–140 (SEGVERALAPPDVHHER). A helical transmembrane segment spans residues 141-161 (LLLVSILGFVVNLVGIFVFNH). A his-rich loop region spans residues 161-220 (HGGHGHSHGSGHGHSHSLFNGALDHSHGHEDHCHSHGAKHGGAHSHDHDHAHGHGHLHSH). The Cytoplasmic portion of the chain corresponds to 162–238 (GGHGHSHGSG…AGPSRQILQG (77 aa)). The disordered stretch occupies residues 186 to 228 (SHGHEDHCHSHGAKHGGAHSHDHDHAHGHGHLHSHDGPSFKET). The segment covering 204–224 (HSHDHDHAHGHGHLHSHDGPS) has biased composition (basic and acidic residues). Residues 239–259 (VFLHILADTLGSIGVIASAIM) form a helical membrane-spanning segment. Topologically, residues 260–264 (MQNFG) are lumenal. A helical transmembrane segment spans residues 265-285 (LMIADPICSILIAILIVVSVI). The Cytoplasmic segment spans residues 286-378 (PLLRESIGIL…LYVQIDFAAM (93 aa)).

The protein belongs to the cation diffusion facilitator (CDF) transporter (TC 2.A.4) family. SLC30A subfamily. Homooligomer.

The protein resides in the golgi apparatus membrane. The protein localises to the cytoplasmic vesicle. It localises to the golgi apparatus. Its subcellular location is the trans-Golgi network. It is found in the sarcoplasmic reticulum. The protein resides in the mitochondrion. It carries out the reaction Zn(2+)(in) = Zn(2+)(out). Functionally, zinc ion transporter mediating zinc entry from the cytosol into the lumen of organelles along the secretory pathway. By contributing to zinc ion homeostasis within the early secretory pathway, regulates the activation and folding of enzymes like alkaline phosphatases. The protein is Zinc transporter 7 of Rattus norvegicus (Rat).